A 134-amino-acid polypeptide reads, in one-letter code: Small ribosomal subunit protein bS16 (134 aa).

The tract at residues 105–134 (QNERREKRLAIKTRRRQAKKAAEAEGQESA) is disordered. The segment covering 114 to 123 (AIKTRRRQAK) has biased composition (basic residues).

The protein belongs to the bacterial ribosomal protein bS16 family.

The protein is Small ribosomal subunit protein bS16 of Chlorobium phaeobacteroides (strain BS1).